The following is a 382-amino-acid chain: Na(+)/H(+) antiporter NhaA 2 (382 aa).

Helical transmembrane passes span methionine 7–leucine 27, leucine 58–leucine 78, serine 94–isoleucine 114, glycine 124–glycine 144, leucine 153–phenylalanine 173, leucine 178–tyrosine 198, tyrosine 199–leucine 219, asparagine 255–isoleucine 275, isoleucine 291–isoleucine 311, phenylalanine 327–leucine 347, and leucine 361–valine 381.

Belongs to the NhaA Na(+)/H(+) (TC 2.A.33) antiporter family.

It is found in the cell inner membrane. It carries out the reaction Na(+)(in) + 2 H(+)(out) = Na(+)(out) + 2 H(+)(in). In terms of biological role, na(+)/H(+) antiporter that extrudes sodium in exchange for external protons. In Campylobacter jejuni (strain RM1221), this protein is Na(+)/H(+) antiporter NhaA 2.